A 55-amino-acid chain; its full sequence is ATP synthase small subunit 6-A, mitochondrial (55 aa).

The N-terminal 11 residues, 1–11, are a transit peptide targeting the mitochondrion; it reads MRLFDPWPVFF. The helical transmembrane segment at 21–39 threads the bilayer; sequence FLTGFAVTGVLITKLTAGL.

This sequence belongs to the ATPase 6 subunit family.

Its subcellular location is the mitochondrion inner membrane. Mitochondrial membrane ATP synthase (F(1)F(0) ATP synthase or Complex V) produces ATP from ADP in the presence of a proton gradient across the membrane which is generated by electron transport complexes of the respiratory chain. F-type ATPases consist of two structural domains, F(1) - containing the extramembraneous catalytic core and F(0) - containing the membrane proton channel, linked together by a central stalk and a peripheral stalk. During catalysis, ATP synthesis in the catalytic domain of F(1) is coupled via a rotary mechanism of the central stalk subunits to proton translocation. Part of the complex F(0) domain. Confers tolerance to several abiotic stresses (e.g. salt, mannitol, drought, oxidative and cold stresses), probably by providing additional energy needed for cell homeostasis. In Arabidopsis thaliana (Mouse-ear cress), this protein is ATP synthase small subunit 6-A, mitochondrial.